The sequence spans 128 residues: Fluoride-specific ion channel FluC (128 aa).

Helical transmembrane passes span Ile5–Gly25, Leu35–Phe55, Leu67–Val87, and Phe96–Leu116. Na(+) is bound by residues Gly75 and Thr78.

This sequence belongs to the fluoride channel Fluc/FEX (TC 1.A.43) family.

Its subcellular location is the cell inner membrane. The enzyme catalyses fluoride(in) = fluoride(out). Na(+) is not transported, but it plays an essential structural role and its presence is essential for fluoride channel function. Fluoride-specific ion channel. Important for reducing fluoride concentration in the cell, thus reducing its toxicity. The polypeptide is Fluoride-specific ion channel FluC (Burkholderia thailandensis (strain ATCC 700388 / DSM 13276 / CCUG 48851 / CIP 106301 / E264)).